A 158-amino-acid chain; its full sequence is Protein E6 (158 aa).

Zinc fingers lie at residues 32-68 and 105-141; these read CVYC…CHKC and CLRC…CHSC. Positions 156–158 match the PDZ-binding domain motif; it reads TQV.

This sequence belongs to the papillomaviridae E6 protein family. Forms homodimers. Interacts with ubiquitin-protein ligase UBE3A/E6-AP and thus forms a complex with human TP53. Interacts with human NFX1 and MAGI3. Interacts with human IRF3; this interaction inhibits the establishment of antiviral state. Interacts with human TYK2; this interaction inhibits JAK-STAT activation by interferon alpha. Interacts with host DLG1; this interaction leads to the proteasomal degradation of DLG1.

It is found in the host cytoplasm. The protein resides in the host nucleus. In terms of biological role, plays a major role in the induction and maintenance of cellular transformation. Acts mainly as an oncoprotein by stimulating the destruction of many host cell key regulatory proteins. E6 associates with host UBE3A/E6-AP ubiquitin-protein ligase, and inactivates tumor suppressors TP53 and TP73 by targeting them to the 26S proteasome for degradation. In turn, DNA damage and chromosomal instabilities increase and lead to cell proliferation and cancer development. The complex E6/E6AP targets several other substrates to degradation via the proteasome including host DLG1 or NFX1, a repressor of human telomerase reverse transcriptase (hTERT). The resulting increased expression of hTERT prevents the shortening of telomere length leading to cell immortalization. Other cellular targets including BAK1, Fas-associated death domain-containing protein (FADD) and procaspase 8, are degraded by E6/E6AP causing inhibition of apoptosis. E6 also inhibits immune response by interacting with host IRF3 and TYK2. These interactions prevent IRF3 transcriptional activities and inhibit TYK2-mediated JAK-STAT activation by interferon alpha resulting in inhibition of the interferon signaling pathway. The sequence is that of Protein E6 from Homo sapiens (Human).